A 101-amino-acid chain; its full sequence is MRSISVGLDREESGSDGLCLGLVVLATLAAGFVAGSDVLRCWGFGPATGDVCLWVEAGFWRCPLPGGGADGQGPGFWDAALREARMFCRSCVGLRMIGWRR.

This is an uncharacterized protein from Encephalitozoon cuniculi (strain GB-M1) (Microsporidian parasite).